The following is a 348-amino-acid chain: Centromere protein L (348 aa).

Belongs to the CENP-L/IML3 family.

The protein resides in the nucleus. It localises to the chromosome. It is found in the centromere. Its function is as follows. Probable component of a centromeric complex involved in assembly of kinetochore proteins, mitotic progression and chromosome segregation. The chain is Centromere protein L (cenpl) from Xenopus tropicalis (Western clawed frog).